The primary structure comprises 309 residues: Homoserine O-succinyltransferase (309 aa).

C142 (acyl-thioester intermediate) is an active-site residue. Residues K163 and S192 each coordinate substrate. Catalysis depends on H235, which acts as the Proton acceptor. Residue E237 is part of the active site. R249 contacts substrate.

This sequence belongs to the MetA family. As to quaternary structure, homodimer.

It localises to the cytoplasm. It catalyses the reaction L-homoserine + succinyl-CoA = O-succinyl-L-homoserine + CoA. The protein operates within amino-acid biosynthesis; L-methionine biosynthesis via de novo pathway; O-succinyl-L-homoserine from L-homoserine: step 1/1. Transfers a succinyl group from succinyl-CoA to L-homoserine, forming succinyl-L-homoserine. The protein is Homoserine O-succinyltransferase of Salmonella choleraesuis (strain SC-B67).